A 483-amino-acid chain; its full sequence is Isocitrate dehydrogenase [NADP] (483 aa).

T74 contacts NADP(+). 5 residues coordinate D-threo-isocitrate: S83, N85, R89, R99, and R121. Mg(2+) is bound at residue D232. NADP(+) contacts are provided by residues 264–270 (HGSAPDI) and N277.

The protein belongs to the isocitrate and isopropylmalate dehydrogenases family. As to quaternary structure, homodimer. Mg(2+) is required as a cofactor. The cofactor is Mn(2+).

It catalyses the reaction D-threo-isocitrate + NADP(+) = 2-oxoglutarate + CO2 + NADPH. Catalyzes the oxidative decarboxylation of isocitrate to 2-oxoglutarate and carbon dioxide with the concomitant reduction of NADP(+). In Rickettsia prowazekii (strain Madrid E), this protein is Isocitrate dehydrogenase [NADP] (icd).